The chain runs to 124 residues: BLOC-1-related complex subunit 8 (124 aa).

The tract at residues 102–124 (SSSQGRSAVINPNETPAHTSVTP) is disordered.

It belongs to the BORCS8 family.

It localises to the lysosome membrane. As part of a BORC-like complex, it may play a role in the movement and localization of lysosomes at the cell periphery. Associated with the cytosolic face of lysosomes, this complex may couple lysosomes to microtubule plus-end-directed kinesin motors, driving lysosome movement toward the cell periphery. The polypeptide is BLOC-1-related complex subunit 8 (Danio rerio (Zebrafish)).